Consider the following 529-residue polypeptide: Probable DNA helicase MPN_340 (529 aa).

Residues glutamate 2 to isoleucine 285 form the UvrD-like helicase ATP-binding domain. Serine 23 to threonine 30 serves as a coordination point for ATP.

Belongs to the helicase family. UvrD subfamily.

It carries out the reaction Couples ATP hydrolysis with the unwinding of duplex DNA by translocating in the 3'-5' direction.. The enzyme catalyses ATP + H2O = ADP + phosphate + H(+). The chain is Probable DNA helicase MPN_340 from Mycoplasma pneumoniae (strain ATCC 29342 / M129 / Subtype 1) (Mycoplasmoides pneumoniae).